The primary structure comprises 798 residues: Type 2 DNA topoisomerase 6 subunit B (798 aa).

Residues Asn-60, Asp-91, 112–113, and 122–129 contribute to the ATP site; these read SR and GQQGIGIS. The span at 221–233 shows a compositional bias: basic and acidic residues; sequence EPEDSFKSERATE. The segment at 221–245 is disordered; sequence EPEDSFKSERATEELPPETEEIRPH. Lys-629 lines the ATP pocket.

The protein belongs to the TOP6B family. As to quaternary structure, homodimer. Heterotetramer of two Top6A and two Top6B chains.

It carries out the reaction ATP-dependent breakage, passage and rejoining of double-stranded DNA.. Functionally, relaxes both positive and negative superturns and exhibits a strong decatenase activity. The polypeptide is Type 2 DNA topoisomerase 6 subunit B (Natronomonas pharaonis (strain ATCC 35678 / DSM 2160 / CIP 103997 / JCM 8858 / NBRC 14720 / NCIMB 2260 / Gabara) (Halobacterium pharaonis)).